The primary structure comprises 249 residues: Olfactory receptor 1571 (249 aa).

The helical transmembrane segment at 1 to 9 threads the bilayer; sequence LLMCNLCFA. Residues 10–40 are Extracellular-facing; the sequence is DICFTSASIPTNLVNIQTKNKVITYEGCISQ. Cysteine 37 and cysteine 119 are oxidised to a cystine. Residues 41–60 traverse the membrane as a helical segment; sequence VYFFILFGVLDNFLLAVMAY. The Cytoplasmic portion of the chain corresponds to 61–82; sequence DRYVAICHPLHYTVIMNRRLCG. Residues 83-103 traverse the membrane as a helical segment; it reads LLVLGSWVTTALNSLLQSSMA. Topologically, residues 104 to 136 are extracellular; that stretch reads LRLSFCTDLKIPHFVCELNQLVLLACNDTFPND. An N-linked (GlcNAc...) asparagine glycan is attached at asparagine 130. A helical membrane pass occupies residues 137 to 158; the sequence is MVMYFAAVLLGGGPLAGILYSY. At 159–180 the chain is on the cytoplasmic side; that stretch reads SKIVSSIRAISSSQGKYKAFST. Residues 181 to 200 traverse the membrane as a helical segment; that stretch reads CASHLSVVSLFYSTLLGVYL. Over 201–210 the chain is Extracellular; that stretch reads SSSFTQNSHS. The helical transmembrane segment at 211–232 threads the bilayer; the sequence is TARASVMYSVVTPMLNPFIYSL. The Cytoplasmic portion of the chain corresponds to 233-249; that stretch reads RNKDLMGALRRLFRRKP.

This sequence belongs to the G-protein coupled receptor 1 family. Tongue specific.

It localises to the cell membrane. Its function is as follows. Possible taste receptor. The chain is Olfactory receptor 1571 (Olr1571) from Rattus norvegicus (Rat).